We begin with the raw amino-acid sequence, 320 residues long: Mitochondrial glutamate carrier 2 (320 aa).

3 Solcar repeats span residues 11–97 (LSIT…LRQL), 105–215 (RNLK…LNQL), and 224–313 (ASFT…GIGE). 3 helical membrane passes run 17-37 (LING…IDLA), 66-86 (FLGM…EKAI), and 111-131 (MLAG…MEML). At Ser-150 the chain carries Phosphoserine. 3 helical membrane passes run 190-210 (GLGA…PLFA), 230-250 (FVAG…LDVL), and 293-313 (ALVI…GIGE).

This sequence belongs to the mitochondrial carrier (TC 2.A.29) family.

Its subcellular location is the mitochondrion inner membrane. It carries out the reaction L-glutamate(in) + H(+)(in) = L-glutamate(out) + H(+)(out). Responsible for the transport of glutamate from the cytosol into the mitochondrial matrix with the concomitant import of a proton (symport system). In Rattus norvegicus (Rat), this protein is Mitochondrial glutamate carrier 2 (Slc25a18).